A 410-amino-acid polypeptide reads, in one-letter code: Dephospho-CoA kinase (410 aa).

Residues 3–201 (CIGITGGIGA…HRILPFAYNL (199 aa)) enclose the DPCK domain. An ATP-binding site is contributed by 11-16 (GAGKSL). The UPF0157 stretch occupies residues 196–410 (PFAYNLSQRQ…EWADSTGWRL (215 aa)).

This sequence in the N-terminal section; belongs to the CoaE family. In the C-terminal section; belongs to the UPF0157 (GrpB) family.

The protein resides in the cytoplasm. The enzyme catalyses 3'-dephospho-CoA + ATP = ADP + CoA + H(+). Its pathway is cofactor biosynthesis; coenzyme A biosynthesis; CoA from (R)-pantothenate: step 5/5. Its function is as follows. Catalyzes the phosphorylation of the 3'-hydroxyl group of dephosphocoenzyme A to form coenzyme A. This is Dephospho-CoA kinase from Mycobacterium leprae (strain TN).